Reading from the N-terminus, the 304-residue chain is Mitochondrial RNA-splicing protein MRS4 (304 aa).

Solcar repeat units lie at residues 21-108 (APLH…CKAR), 118-200 (HQPM…ASKF), and 207-300 (YNPL…AKHF). 6 consecutive transmembrane segments (helical) span residues 23 to 41 (LHSQ…HSLM), 83 to 102 (GVQS…FGTY), 120 to 139 (PMKT…ALMN), 175 to 194 (SYPT…FMIY), 209 to 228 (PLIH…ALTT), and 275 to 288 (GLKP…PATA).

It belongs to the mitochondrial carrier (TC 2.A.29) family.

Its subcellular location is the mitochondrion inner membrane. Functionally, MRS4 suppresses a mitochondrial splice defect in the first intron of the COB gene. It may act as a carrier, exerting its suppressor activity via modulation of solute concentrations in the mitochondrion (possibly of cations). Not essential. This chain is Mitochondrial RNA-splicing protein MRS4 (MRS4), found in Saccharomyces cerevisiae (strain ATCC 204508 / S288c) (Baker's yeast).